Here is a 119-residue protein sequence, read N- to C-terminus: Non-structural protein 3b (119 aa).

Positions 3–79 (YVSLLNQVWQ…AARKVCLRLQ (77 aa)) constitute a DRBM domain.

Interacts with host RUNX1 isoform b.

The protein localises to the host nucleus. Its subcellular location is the host nucleolus. The protein resides in the host mitochondrion. Its function is as follows. Induces host cell G0/G1 arrest and apoptosis. The sequence is that of Non-structural protein 3b from Pipistrellus abramus (Japanese pipistrelle).